A 266-amino-acid polypeptide reads, in one-letter code: Amylovoran biosynthesis glycosyltransferase AmsE (266 aa).

The protein belongs to the glycosyltransferase 2 family.

It participates in glycan metabolism; exopolysaccharide biosynthesis. In terms of biological role, involved in the biosynthesis of amylovoran which functions as a virulence factor. This is Amylovoran biosynthesis glycosyltransferase AmsE (amsE) from Erwinia amylovora (Fire blight bacteria).